The chain runs to 329 residues: GTP 3',8-cyclase (329 aa).

A Radical SAM core domain is found at 8 to 234 (AFARKFYYLR…QLRQRSDGPA (227 aa)). Arg17 contacts GTP. Positions 24 and 28 each coordinate [4Fe-4S] cluster. An S-adenosyl-L-methionine-binding site is contributed by Tyr30. Position 31 (Cys31) interacts with [4Fe-4S] cluster. Arg68 lines the GTP pocket. Gly72 serves as a coordination point for S-adenosyl-L-methionine. Residue Thr99 coordinates GTP. Position 123 (Ser123) interacts with S-adenosyl-L-methionine. GTP is bound at residue Lys160. Residue Met194 coordinates S-adenosyl-L-methionine. [4Fe-4S] cluster contacts are provided by Cys257 and Cys260. 262–264 (RLR) is a GTP binding site. Cys274 is a binding site for [4Fe-4S] cluster.

It belongs to the radical SAM superfamily. MoaA family. Monomer and homodimer. [4Fe-4S] cluster serves as cofactor.

The enzyme catalyses GTP + AH2 + S-adenosyl-L-methionine = (8S)-3',8-cyclo-7,8-dihydroguanosine 5'-triphosphate + 5'-deoxyadenosine + L-methionine + A + H(+). It participates in cofactor biosynthesis; molybdopterin biosynthesis. In terms of biological role, catalyzes the cyclization of GTP to (8S)-3',8-cyclo-7,8-dihydroguanosine 5'-triphosphate. The chain is GTP 3',8-cyclase from Salmonella dublin (strain CT_02021853).